Reading from the N-terminus, the 299-residue chain is Probable alpha-L-glutamate ligase (299 aa).

The ATP-grasp domain maps to 104–287 (LQLLAREGIE…VSGKIIEFLE (184 aa)). ATP contacts are provided by residues K141, 178–179 (EF), D187, and 211–213 (RSN). Positions 248, 260, and 262 each coordinate Mg(2+). Positions 248, 260, and 262 each coordinate Mn(2+).

Belongs to the RimK family. Mg(2+) is required as a cofactor. Mn(2+) serves as cofactor.

This is Probable alpha-L-glutamate ligase from Trichodesmium erythraeum (strain IMS101).